The chain runs to 164 residues: CASP-like protein 1C2 (164 aa).

The Cytoplasmic portion of the chain corresponds to 1-8 (MVKLTQRL). A helical membrane pass occupies residues 9–29 (GGLVLRFAAFCAALGAVIAMI). At 30–51 (TSRERSSFFVISLVAKYSDLAA) the chain is on the extracellular side. A helical membrane pass occupies residues 52–72 (FKYFVIANAIVTVYSFLVLFL). The Cytoplasmic segment spans residues 73–80 (PKESLLWK). A helical transmembrane segment spans residues 81-101 (FVVVLDLMVTMLLTSSLSAAV). The Extracellular portion of the chain corresponds to 102–129 (AVAQVGKRGNANAGWLPICGQVPRFCDQ). The helical transmembrane segment at 130–150 (ITGALIAGLVALVLYVFLLIF) threads the bilayer. The Cytoplasmic segment spans residues 151–164 (SIHHVVDPFLLRKS).

Belongs to the Casparian strip membrane proteins (CASP) family. Homodimer and heterodimers.

Its subcellular location is the cell membrane. This is CASP-like protein 1C2 from Arabidopsis thaliana (Mouse-ear cress).